Consider the following 166-residue polypeptide: Regulatory protein RecX (166 aa).

The protein belongs to the RecX family.

The protein resides in the cytoplasm. In terms of biological role, modulates RecA activity. This Salmonella newport (strain SL254) protein is Regulatory protein RecX.